The sequence spans 811 residues: LPS-assembly protein LptD (811 aa).

Residues 1 to 17 (MTEPNRARKTRQRTAFA) form the signal peptide. A disordered region spans residues 1-22 (MTEPNRARKTRQRTAFAAPDQR).

The protein belongs to the LptD family. Component of the lipopolysaccharide transport and assembly complex. Interacts with LptE and LptA.

It localises to the cell outer membrane. Together with LptE, is involved in the assembly of lipopolysaccharide (LPS) at the surface of the outer membrane. The protein is LPS-assembly protein LptD of Ralstonia nicotianae (strain ATCC BAA-1114 / GMI1000) (Ralstonia solanacearum).